The chain runs to 140 residues: Large ribosomal subunit protein uL22 (140 aa).

This sequence belongs to the universal ribosomal protein uL22 family. In terms of assembly, part of the 50S ribosomal subunit.

This protein binds specifically to 23S rRNA; its binding is stimulated by other ribosomal proteins, e.g. L4, L17, and L20. It is important during the early stages of 50S assembly. It makes multiple contacts with different domains of the 23S rRNA in the assembled 50S subunit and ribosome. Functionally, the globular domain of the protein is located near the polypeptide exit tunnel on the outside of the subunit, while an extended beta-hairpin is found that lines the wall of the exit tunnel in the center of the 70S ribosome. The protein is Large ribosomal subunit protein uL22 of Parafrankia sp. (strain EAN1pec).